A 330-amino-acid chain; its full sequence is MLHPALALVPGEPAGVGPELCVRLVQQPRQDCRLVAFADPATLQAAAAALDLPLRLLPPEALPERPGDLPIQAHCHVHPTRFGHPDPANAPAVIAALCEAASHCVHGVLHGIVTGPVHKAVINQSGIHYTGTTELLAAQAECDVVMMLANPHLRVALVTTHLPLRDVPDAITAALLERCLRIVNTAMCGDFGIATPRIAVLGLNPHAGEEGYLGREELDVVIPVLQRLRAEGMVLLGPLSADTAFLPTKLIGYDAVVAMYHDQGLPVLKHSGFEQAVNITLGLPYPRVAVDHGTALDLAGRGVADPSSLFAATALCARLAASRALLSVRS.

Thr133 serves as a coordination point for substrate. Residues His161, His206, and His261 each coordinate a divalent metal cation. Residues Lys269, Asn278, and Arg287 each contribute to the substrate site.

The protein belongs to the PdxA family. Homodimer. It depends on Zn(2+) as a cofactor. The cofactor is Mg(2+). Requires Co(2+) as cofactor.

It is found in the cytoplasm. It carries out the reaction 4-(phosphooxy)-L-threonine + NAD(+) = 3-amino-2-oxopropyl phosphate + CO2 + NADH. The protein operates within cofactor biosynthesis; pyridoxine 5'-phosphate biosynthesis; pyridoxine 5'-phosphate from D-erythrose 4-phosphate: step 4/5. In terms of biological role, catalyzes the NAD(P)-dependent oxidation of 4-(phosphooxy)-L-threonine (HTP) into 2-amino-3-oxo-4-(phosphooxy)butyric acid which spontaneously decarboxylates to form 3-amino-2-oxopropyl phosphate (AHAP). This Xylella fastidiosa (strain Temecula1 / ATCC 700964) protein is 4-hydroxythreonine-4-phosphate dehydrogenase.